The following is a 354-amino-acid chain: Protein Wnt-11 (354 aa).

Positions 1–24 are cleaved as a signal peptide; sequence MKPSPQFFLAAFLSLILQTGICYG. N-linked (GlcNAc...) asparagine glycosylation is found at Asn-40 and Asn-90. Disulfide bonds link Cys-80–Cys-91, Cys-130–Cys-138, Cys-140–Cys-157, Cys-209–Cys-223, Cys-211–Cys-218, Cys-283–Cys-314, Cys-299–Cys-309, Cys-313–Cys-353, Cys-329–Cys-344, Cys-331–Cys-341, and Cys-336–Cys-337. The O-palmitoleoyl serine; by PORCN moiety is linked to residue Ser-215. 2 N-linked (GlcNAc...) asparagine glycosylation sites follow: Asn-300 and Asn-304.

It belongs to the Wnt family. In terms of processing, palmitoleoylation is required for efficient binding to frizzled receptors. Depalmitoleoylation leads to Wnt signaling pathway inhibition. As to expression, expressed in the dermatome. The expression domain is mutually exclusive to the other Wnt genes.

It localises to the secreted. The protein resides in the extracellular space. It is found in the extracellular matrix. In terms of biological role, ligand for members of the frizzled family of seven transmembrane receptors. May play a role in the formation of dermal structure, both limb and feather buds. Is likely to signal over only few cell diameters. This is Protein Wnt-11 (WNT11) from Gallus gallus (Chicken).